Reading from the N-terminus, the 394-residue chain is Muscle cell intermediate filament protein AV71 (394 aa).

The tract at residues 1 to 73 (AEINLVRRRV…RVHDQEITEL (73 aa)) is coil 1B. One can recognise an IF rod domain in the interval 1–239 (AEINLVRRRV…KMLEGEENRA (239 aa)). The interval 74-91 (QAMAARDTTPENREYFKN) is linker 12. A coil 2 region spans residues 92–239 (ELSSAIRDIR…KMLEGEENRA (148 aa)). Residues 240-394 (GLRQLVEQVV…HIQRSSHTIN (155 aa)) are tail. An LTD domain is found at 272 to 389 (SRTSFQRSAK…EERASHIQRS (118 aa)).

The protein belongs to the intermediate filament family.

The polypeptide is Muscle cell intermediate filament protein AV71 (AV71) (Acanthocheilonema viteae (Filarial nematode worm)).